The following is a 466-amino-acid chain: 3-isopropylmalate dehydratase large subunit (466 aa).

The [4Fe-4S] cluster site is built by C347, C407, and C410.

Belongs to the aconitase/IPM isomerase family. LeuC type 1 subfamily. As to quaternary structure, heterodimer of LeuC and LeuD. [4Fe-4S] cluster serves as cofactor.

It catalyses the reaction (2R,3S)-3-isopropylmalate = (2S)-2-isopropylmalate. The protein operates within amino-acid biosynthesis; L-leucine biosynthesis; L-leucine from 3-methyl-2-oxobutanoate: step 2/4. Catalyzes the isomerization between 2-isopropylmalate and 3-isopropylmalate, via the formation of 2-isopropylmaleate. The protein is 3-isopropylmalate dehydratase large subunit of Escherichia coli O157:H7.